A 478-amino-acid polypeptide reads, in one-letter code: Adenosylhomocysteinase (478 aa).

The substrate site is built by Thr67, Asp144, and Glu204. Residue 205 to 207 participates in NAD(+) binding; sequence TTT. Substrate contacts are provided by Lys234 and Asp238. Residues Asn239, 268 to 273, Glu291, Asn326, 347 to 349, and Asn392 contribute to the NAD(+) site; these read GYGDVG and IGH.

This sequence belongs to the adenosylhomocysteinase family. It depends on NAD(+) as a cofactor.

It is found in the cytoplasm. The catalysed reaction is S-adenosyl-L-homocysteine + H2O = L-homocysteine + adenosine. It functions in the pathway amino-acid biosynthesis; L-homocysteine biosynthesis; L-homocysteine from S-adenosyl-L-homocysteine: step 1/1. May play a key role in the regulation of the intracellular concentration of adenosylhomocysteine. This chain is Adenosylhomocysteinase, found in Nitrosomonas europaea (strain ATCC 19718 / CIP 103999 / KCTC 2705 / NBRC 14298).